A 363-amino-acid polypeptide reads, in one-letter code: 3-isopropylmalate dehydrogenase (363 aa).

78–91 is a binding site for NAD(+); that stretch reads GPKWEHLPPAEQPE. Residues Arg99, Arg109, Arg138, and Asp227 each contribute to the substrate site. Asp227, Asp251, and Asp255 together coordinate Mg(2+). NAD(+) is bound at residue 285 to 297; the sequence is GSAPDIAGKNIAN.

This sequence belongs to the isocitrate and isopropylmalate dehydrogenases family. LeuB type 1 subfamily. Homodimer. Requires Mg(2+) as cofactor. It depends on Mn(2+) as a cofactor.

The protein resides in the cytoplasm. The enzyme catalyses (2R,3S)-3-isopropylmalate + NAD(+) = 4-methyl-2-oxopentanoate + CO2 + NADH. It functions in the pathway amino-acid biosynthesis; L-leucine biosynthesis; L-leucine from 3-methyl-2-oxobutanoate: step 3/4. Its function is as follows. Catalyzes the oxidation of 3-carboxy-2-hydroxy-4-methylpentanoate (3-isopropylmalate) to 3-carboxy-4-methyl-2-oxopentanoate. The product decarboxylates to 4-methyl-2 oxopentanoate. This is 3-isopropylmalate dehydrogenase from Yersinia pestis.